Here is a 422-residue protein sequence, read N- to C-terminus: Serine hydroxymethyltransferase (422 aa).

(6S)-5,6,7,8-tetrahydrofolate-binding positions include Leu-120 and 124 to 126 (GHL). N6-(pyridoxal phosphate)lysine is present on Lys-228.

This sequence belongs to the SHMT family. Homodimer. Requires pyridoxal 5'-phosphate as cofactor.

Its subcellular location is the cytoplasm. It carries out the reaction (6R)-5,10-methylene-5,6,7,8-tetrahydrofolate + glycine + H2O = (6S)-5,6,7,8-tetrahydrofolate + L-serine. It participates in one-carbon metabolism; tetrahydrofolate interconversion. It functions in the pathway amino-acid biosynthesis; glycine biosynthesis; glycine from L-serine: step 1/1. In terms of biological role, catalyzes the reversible interconversion of serine and glycine with tetrahydrofolate (THF) serving as the one-carbon carrier. This reaction serves as the major source of one-carbon groups required for the biosynthesis of purines, thymidylate, methionine, and other important biomolecules. Also exhibits THF-independent aldolase activity toward beta-hydroxyamino acids, producing glycine and aldehydes, via a retro-aldol mechanism. The polypeptide is Serine hydroxymethyltransferase (Actinobacillus succinogenes (strain ATCC 55618 / DSM 22257 / CCUG 43843 / 130Z)).